A 348-amino-acid polypeptide reads, in one-letter code: Dihydroorotase (348 aa).

Residues H14 and H16 each coordinate Zn(2+). Substrate-binding positions include 16 to 18 and N42; that span reads HLR. Zn(2+)-binding residues include K100, H137, and H175. K100 is modified (N6-carboxylysine). H137 is a binding site for substrate. L220 is a binding site for substrate. Residue D248 participates in Zn(2+) binding. Residue D248 is part of the active site. 2 residues coordinate substrate: H252 and A264.

It belongs to the metallo-dependent hydrolases superfamily. DHOase family. Class II DHOase subfamily. As to quaternary structure, homodimer. Requires Zn(2+) as cofactor.

The catalysed reaction is (S)-dihydroorotate + H2O = N-carbamoyl-L-aspartate + H(+). It participates in pyrimidine metabolism; UMP biosynthesis via de novo pathway; (S)-dihydroorotate from bicarbonate: step 3/3. In terms of biological role, catalyzes the reversible cyclization of carbamoyl aspartate to dihydroorotate. The sequence is that of Dihydroorotase from Pseudomonas aeruginosa (strain UCBPP-PA14).